We begin with the raw amino-acid sequence, 595 residues long: Glutamyl-tRNA(Gln) amidotransferase subunit B, mitochondrial (595 aa).

The N-terminal 72 residues, 1 to 72 (MPRLWYSRYL…RAKSQSRNGR (72 aa)), are a transit peptide targeting the mitochondrion.

Belongs to the GatB/GatE family. GatB subfamily. As to quaternary structure, subunit of the heterotrimeric GatCAB amidotransferase (AdT) complex, composed of A, B and C subunits.

It is found in the mitochondrion. The catalysed reaction is L-glutamyl-tRNA(Gln) + L-glutamine + ATP + H2O = L-glutaminyl-tRNA(Gln) + L-glutamate + ADP + phosphate + H(+). Functionally, allows the formation of correctly charged Gln-tRNA(Gln) through the transamidation of misacylated Glu-tRNA(Gln) in the mitochondria. The reaction takes place in the presence of glutamine and ATP through an activated gamma-phospho-Glu-tRNA(Gln). This Talaromyces marneffei (strain ATCC 18224 / CBS 334.59 / QM 7333) (Penicillium marneffei) protein is Glutamyl-tRNA(Gln) amidotransferase subunit B, mitochondrial.